A 784-amino-acid polypeptide reads, in one-letter code: E3 UFM1-protein ligase 1 homolog (784 aa).

Residues 405 to 480 (SVSTQELEDD…RGGGAGNKKA (76 aa)) are disordered. The segment covering 444–454 (KSTKKHQRGKA) has biased composition (basic residues).

The protein belongs to the UFL1 family.

In terms of biological role, E3 UFM1-protein ligase that mediates ufmylation of target proteins. The protein is E3 UFM1-protein ligase 1 homolog of Drosophila yakuba (Fruit fly).